The primary structure comprises 539 residues: CTP synthase (539 aa).

The tract at residues 1-272 (MTLRSKMTKY…AQIILSHFKI (272 aa)) is amidoligase domain. CTP is bound at residue S19. UTP is bound at residue S19. Residue 20–25 (GLGKGV) participates in ATP binding. Y60 contacts L-glutamine. D77 lines the ATP pocket. D77 and E147 together coordinate Mg(2+). CTP contacts are provided by residues 154–156 (DIE), 193–198 (KSKPTQ), and K229. Residues 193–198 (KSKPTQ) and K229 contribute to the UTP site. In terms of domain architecture, Glutamine amidotransferase type-1 spans 298 to 539 (KILMVGKYVE…SFLRVLIKNN (242 aa)). Residue G360 participates in L-glutamine binding. C387 (nucleophile; for glutamine hydrolysis) is an active-site residue. L-glutamine-binding positions include 388–391 (LGFQ), E410, and R469. Active-site residues include H514 and E516.

It belongs to the CTP synthase family. In terms of assembly, homotetramer.

It carries out the reaction UTP + L-glutamine + ATP + H2O = CTP + L-glutamate + ADP + phosphate + 2 H(+). It catalyses the reaction L-glutamine + H2O = L-glutamate + NH4(+). The enzyme catalyses UTP + NH4(+) + ATP = CTP + ADP + phosphate + 2 H(+). It participates in pyrimidine metabolism; CTP biosynthesis via de novo pathway; CTP from UDP: step 2/2. Its activity is regulated as follows. Allosterically activated by GTP, when glutamine is the substrate; GTP has no effect on the reaction when ammonia is the substrate. The allosteric effector GTP functions by stabilizing the protein conformation that binds the tetrahedral intermediate(s) formed during glutamine hydrolysis. Inhibited by the product CTP, via allosteric rather than competitive inhibition. Its function is as follows. Catalyzes the ATP-dependent amination of UTP to CTP with either L-glutamine or ammonia as the source of nitrogen. Regulates intracellular CTP levels through interactions with the four ribonucleotide triphosphates. This chain is CTP synthase, found in Mycoplasmopsis pulmonis (strain UAB CTIP) (Mycoplasma pulmonis).